A 508-amino-acid chain; its full sequence is Nucleolar complex protein 4 homolog (508 aa).

A run of 3 helical transmembrane segments spans residues 288–308 (VAYGVGGAISLLALNGLFILI), 341–361 (HLADLFLSSSHLPAYLVAAFI), and 367–387 (LALTAPPEALLMVIPFICNLF).

It belongs to the CBF/MAK21 family.

The protein localises to the nucleus membrane. It localises to the nucleus. Its subcellular location is the nucleolus. In Gallus gallus (Chicken), this protein is Nucleolar complex protein 4 homolog (NOC4L).